The chain runs to 222 residues: Tegument protein UL26 (222 aa).

It belongs to the herpesviridae US22 family. As to quaternary structure, interacts with UL25. Interacts with ISGylation machinery components ISG15, UBA7 and HERC5; these interactions inhibit global protein ISGylation. Post-translationally, ISGylated; ISGylation regulates UL26 stability and inhibits its activities to suppress NF-kappa-B signaling.

The protein resides in the virion tegument. It is found in the host nucleus. Its function is as follows. Plays a role in the inhibition of host NF-kappa-B. This inhibition affects both the canonical and the non-canonical pathways. Blocks the induction of host IKK phosphorylation. May also influence the normal phosphorylation state of several tegument proteins including pp28 in virions. Also suppresses virus-induced ISGylation independent of its own ISGylation. The protein is Tegument protein UL26 (UL26) of Homo sapiens (Human).